The following is a 98-amino-acid chain: Co-chaperonin GroES (98 aa).

The protein belongs to the GroES chaperonin family. Heptamer of 7 subunits arranged in a ring. Interacts with the chaperonin GroEL.

It localises to the cytoplasm. Its function is as follows. Together with the chaperonin GroEL, plays an essential role in assisting protein folding. The GroEL-GroES system forms a nano-cage that allows encapsulation of the non-native substrate proteins and provides a physical environment optimized to promote and accelerate protein folding. GroES binds to the apical surface of the GroEL ring, thereby capping the opening of the GroEL channel. This Renibacterium salmoninarum (strain ATCC 33209 / DSM 20767 / JCM 11484 / NBRC 15589 / NCIMB 2235) protein is Co-chaperonin GroES.